A 202-amino-acid chain; its full sequence is Superoxide dismutase [Mn/Fe] (202 aa).

Fe(3+) is bound by residues histidine 27, histidine 81, aspartate 163, and histidine 167. Positions 27, 81, 163, and 167 each coordinate Mn(2+).

The protein belongs to the iron/manganese superoxide dismutase family. The cofactor is Mn(2+). Fe(3+) serves as cofactor.

It catalyses the reaction 2 superoxide + 2 H(+) = H2O2 + O2. Functionally, destroys superoxide anion radicals which are normally produced within the cells and which are toxic to biological systems. Catalyzes the dismutation of superoxide anion radicals into O2 and H2O2 by successive reduction and oxidation of the transition metal ion at the active site. The polypeptide is Superoxide dismutase [Mn/Fe] (sodA) (Streptococcus agalactiae serotype V (strain ATCC BAA-611 / 2603 V/R)).